Here is an 85-residue protein sequence, read N- to C-terminus: Large ribosomal subunit protein bL27 (85 aa).

A disordered region spans residues 1 to 21 (MAHKKGLGSTKNGRDSQAKRL).

It belongs to the bacterial ribosomal protein bL27 family.

The protein is Large ribosomal subunit protein bL27 of Thermus thermophilus (strain ATCC BAA-163 / DSM 7039 / HB27).